The following is an 859-amino-acid chain: Leucine--tRNA ligase (859 aa).

Positions 42-52 (PYPSGRLHMGH) match the 'HIGH' region motif. The 'KMSKS' region motif lies at 618–622 (KMSKS). Position 621 (K621) interacts with ATP.

Belongs to the class-I aminoacyl-tRNA synthetase family.

Its subcellular location is the cytoplasm. It carries out the reaction tRNA(Leu) + L-leucine + ATP = L-leucyl-tRNA(Leu) + AMP + diphosphate. This is Leucine--tRNA ligase from Shewanella baltica (strain OS195).